The chain runs to 382 residues: Leucine carboxyl methyltransferase 1 (382 aa).

Polar residues predominate over residues 1-11 (MSAPQIPNLNT). Residues 1-45 (MSAPQIPNLNTLRRGGGRGRFRARGGPDSSSSSGNKDRVVQGTDN) form a disordered region. S-adenosyl-L-methionine contacts are provided by residues arginine 88, glycine 121, aspartate 146, 193 to 194 (DL), and glutamate 230.

It belongs to the methyltransferase superfamily. LCMT family.

It catalyses the reaction [phosphatase 2A protein]-C-terminal L-leucine + S-adenosyl-L-methionine = [phosphatase 2A protein]-C-terminal L-leucine methyl ester + S-adenosyl-L-homocysteine. In terms of biological role, methylates the carboxyl group of the C-terminal leucine residue of protein phosphatase 2A catalytic subunits to form alpha-leucine ester residues. The chain is Leucine carboxyl methyltransferase 1 (ppm1) from Emericella nidulans (strain FGSC A4 / ATCC 38163 / CBS 112.46 / NRRL 194 / M139) (Aspergillus nidulans).